Here is a 206-residue protein sequence, read N- to C-terminus: Thymidylate kinase (206 aa).

Position 10–17 (10–17 (GVDGVGKT)) interacts with ATP.

It belongs to the thymidylate kinase family.

It carries out the reaction dTMP + ATP = dTDP + ADP. Its function is as follows. Phosphorylation of dTMP to form dTDP in both de novo and salvage pathways of dTTP synthesis. This is Thymidylate kinase from Bifidobacterium longum (strain DJO10A).